Consider the following 247-residue polypeptide: Triosephosphate isomerase (247 aa).

8-10 lines the substrate pocket; the sequence is NWK. Residue His94 is the Electrophile of the active site. Glu165 (proton acceptor) is an active-site residue. Residues Gly171 and Ser210 each coordinate substrate.

The protein belongs to the triosephosphate isomerase family. As to quaternary structure, homodimer.

The protein resides in the cytoplasm. The catalysed reaction is D-glyceraldehyde 3-phosphate = dihydroxyacetone phosphate. The protein operates within carbohydrate biosynthesis; gluconeogenesis. It functions in the pathway carbohydrate degradation; glycolysis; D-glyceraldehyde 3-phosphate from glycerone phosphate: step 1/1. In terms of biological role, involved in the gluconeogenesis. Catalyzes stereospecifically the conversion of dihydroxyacetone phosphate (DHAP) to D-glyceraldehyde-3-phosphate (G3P). This chain is Triosephosphate isomerase, found in Aquifex aeolicus (strain VF5).